The following is a 208-amino-acid chain: Small ribosomal subunit protein uS4 (208 aa).

The 66-residue stretch at 98–163 (QRLDNVVYRM…NPQITRAIEL (66 aa)) folds into the S4 RNA-binding domain.

It belongs to the universal ribosomal protein uS4 family. As to quaternary structure, part of the 30S ribosomal subunit. Contacts protein S5. The interaction surface between S4 and S5 is involved in control of translational fidelity.

Its function is as follows. One of the primary rRNA binding proteins, it binds directly to 16S rRNA where it nucleates assembly of the body of the 30S subunit. Functionally, with S5 and S12 plays an important role in translational accuracy. This chain is Small ribosomal subunit protein uS4, found in Campylobacter jejuni subsp. jejuni serotype O:6 (strain 81116 / NCTC 11828).